We begin with the raw amino-acid sequence, 363 residues long: uncharacterized protein (363 aa).

A run of 4 helical transmembrane segments spans residues 34–54 (YVYD…IILW), 60–80 (LALF…TLLV), 91–111 (EIAD…TAAG), and 112–132 (LMFS…PLFL). Residues 232 to 245 (SSTTTHSTDSEQIL) show a composition bias toward polar residues. The segment at 232 to 363 (SSTTTHSTDS…SSQKKKPSRK (132 aa)) is disordered. 2 stretches are compositionally biased toward low complexity: residues 246 to 268 (TSVS…TPPN) and 275 to 285 (DSNSSDSSSSS). The span at 322–342 (SRSERNAQHHRNKDQEQRQDS) shows a compositional bias: basic and acidic residues.

It belongs to the chlamydial CPn_0443/CT_005/TC_0273 family.

It localises to the cell membrane. This is an uncharacterized protein from Chlamydia trachomatis serovar D (strain ATCC VR-885 / DSM 19411 / UW-3/Cx).